The primary structure comprises 2357 residues: Protein transport protein Sec16A (2357 aa).

Disordered stretches follow at residues 1–25 and 57–303; these read MQPPPQTVPSGMAGPPPAGNPRSVF and FSRQ…STFR. Low complexity-rich tracts occupy residues 64–76 and 210–227; these read STPLGSSSKSSPP and QMPGQWGPVQGGPQPSGQ. A compositionally biased stretch (polar residues) spans 285-303; it reads HLQSGSHLANNSDPESTFR. A phosphoserine mark is found at serine 296, serine 314, and serine 331. Disordered stretches follow at residues 335 to 359, 508 to 540, 553 to 603, 758 to 828, 924 to 987, 1006 to 1038, and 1059 to 1151; these read NPLARGDSPENRTHHPLGAGAGSGC, APDATLHTVHPDSVSSSYSSRSHGRLSGSARPQ, KPED…TGIF, VQPP…NPPV, LLVQ…SSHQ, VNVYNPSHSDSLASQQSVASHPRQSGPGAPNLD, and QELV…APGP. A compositionally biased stretch (low complexity) spans 520-536; the sequence is SVSSSYSSRSHGRLSGS. Residues serine 559, serine 569, serine 587, serine 589, and serine 592 each carry the phosphoserine modification. The residue at position 593 (threonine 593) is a Phosphothreonine. Serine 595 is subject to Phosphoserine. 2 stretches are compositionally biased toward polar residues: residues 766 to 778 and 803 to 825; these read SGQQSRNPSSAAP and LQSQASSGYASLLSSPPTESLQN. Positions 1006 to 1028 are enriched in polar residues; it reads VNVYNPSHSDSLASQQSVASHPR. Residues 1019 to 1890 are required for localization to endoplasmic reticulum exit sites; that stretch reads SQQSVASHPR…QQVERQIKEG (872 aa). At serine 1069 the chain carries Phosphoserine. Polar residues predominate over residues 1080–1101; sequence ELSNPESLPAQGQAQNSAQSPA. The tract at residues 1101-1400 is interaction with MIA3; sequence ASLVLVDAGQ…EAPLPPGSFH (300 aa). Residues 1102–1405 are required for endoplasmic reticulum localization; it reads SLVLVDAGQQ…PGSFHGDFAY (304 aa). A compositionally biased stretch (low complexity) spans 1118–1131; the sequence is QSSSVSLVSSGSGQ. Pro residues predominate over residues 1138–1151; sequence QPWPQPVPALAPGP. Phosphoserine occurs at positions 1207, 1229, and 1305. The segment at 1215-1248 is disordered; it reads YPEPERPSSRASHSSERPPPRQGYPEGYYSSKSG. Basic and acidic residues predominate over residues 1216 to 1233; it reads PEPERPSSRASHSSERPP. The segment covering 1307-1322 has biased composition (basic and acidic residues); it reads FGDRPEKRDNNWRYDP. The interval 1307–1378 is disordered; it reads FGDRPEKRDN…SLSSHSHQSQ (72 aa). Phosphothreonine is present on threonine 1325. A phosphoserine mark is found at serine 1327, serine 1347, serine 1350, serine 1356, serine 1359, serine 1362, serine 1369, serine 1573, and serine 1601. The segment covering 1333–1354 has biased composition (basic and acidic residues); that stretch reads DPHRDPYGEEVDRRSVHSEHSA. Residues 1356–1375 show a composition bias toward low complexity; the sequence is SLHSAHSLASRRSSLSSHSH. The segment at 1434-1890 is central conserved domain (CCD); mediates interaction with RNF183, LRRK2 and SEC13; it reads QVSSRPTSPE…QQVERQIKEG (457 aa). Position 1907 is a phosphothreonine (threonine 1907). Residues serine 1939, serine 1964, serine 2022, and serine 2042 each carry the phosphoserine modification. Disordered regions lie at residues 2049–2110, 2141–2181, and 2226–2328; these read KFAN…SWFF, VNLN…PVNM, and NLFV…MPFY. Threonine 2054 bears the Phosphothreonine mark. Serine 2056, serine 2073, and serine 2083 each carry phosphoserine. Over residues 2087–2106 the composition is skewed to basic and acidic residues; it reads ETKRPGQAAKKETKEPKKGE. Residues 2106–2357 are required for interaction with SEC23A; the sequence is ESWFFRWLPG…IGQRKHLVLN (252 aa). 2 positions are modified to phosphoserine: serine 2271 and serine 2291. Composition is skewed to low complexity over residues 2289–2302 and 2310–2324; these read ELSRCSSMSSLSRE and APGDLPAAGGPPSGA.

Belongs to the SEC16 family. As to quaternary structure, SEC16A and SEC16B are each present in multiple copies in a heteromeric complex. Interacts with SEC23A. Interacts with RNF183 and RNF152. Interacts with LRRK2 (via ROC domain). Interacts with SEC13. Interacts with RAB10. Interacts with MIA3. Interacts with GORASP2 in response to ER stress. As to expression, ubiquitous. Expressed at higher levels in the pancreas.

The protein localises to the endoplasmic reticulum membrane. It is found in the golgi apparatus membrane. Its subcellular location is the cytoplasm. The protein resides in the perinuclear region. It localises to the cytosol. The protein localises to the microsome membrane. In terms of biological role, acts as a molecular scaffold that plays a key role in the organization of the endoplasmic reticulum exit sites (ERES), also known as transitional endoplasmic reticulum (tER). SAR1A-GTP-dependent assembly of SEC16A on the ER membrane forms an organized scaffold defining an ERES. Required for secretory cargo traffic from the endoplasmic reticulum to the Golgi apparatus. Mediates the recruitment of MIA3/TANGO to ERES. Regulates both conventional (ER/Golgi-dependent) and GORASP2-mediated unconventional (ER/Golgi-independent) trafficking of CFTR to cell membrane. Positively regulates the protein stability of E3 ubiquitin-protein ligases RNF152 and RNF183 and the ER localization of RNF183. Acts as a RAB10 effector in the regulation of insulin-induced SLC2A4/GLUT4 glucose transporter-enriched vesicles delivery to the cell membrane in adipocytes. In Homo sapiens (Human), this protein is Protein transport protein Sec16A (SEC16A).